A 210-amino-acid polypeptide reads, in one-letter code: Small ribosomal subunit protein uS3 (210 aa).

The region spanning 38 to 106 (IRQFLKKRLY…EVFININEVR (69 aa)) is the KH type-2 domain.

Belongs to the universal ribosomal protein uS3 family. In terms of assembly, part of the 30S ribosomal subunit. Forms a tight complex with proteins S10 and S14.

Functionally, binds the lower part of the 30S subunit head. Binds mRNA in the 70S ribosome, positioning it for translation. This Trichlorobacter lovleyi (strain ATCC BAA-1151 / DSM 17278 / SZ) (Geobacter lovleyi) protein is Small ribosomal subunit protein uS3.